The chain runs to 299 residues: Inactive recombination-promoting nuclease-like protein RpnE (299 aa).

It belongs to the Rpn/YhgA-like nuclease family.

Functionally, upon expression has no effect on RecA-independent DNA recombination, cell viability or DNA damage. The chain is Inactive recombination-promoting nuclease-like protein RpnE (yfaD) from Escherichia coli (strain K12).